The primary structure comprises 362 residues: UDP-N-acetylglucosamine--N-acetylmuramyl-(pentapeptide) pyrophosphoryl-undecaprenol N-acetylglucosamine transferase (362 aa).

UDP-N-acetyl-alpha-D-glucosamine is bound by residues 15–17 (TGG), asparagine 127, arginine 165, serine 191, isoleucine 247, 266–271 (ALTVSE), and glutamine 292.

This sequence belongs to the glycosyltransferase 28 family. MurG subfamily.

It is found in the cell inner membrane. The enzyme catalyses di-trans,octa-cis-undecaprenyl diphospho-N-acetyl-alpha-D-muramoyl-L-alanyl-D-glutamyl-meso-2,6-diaminopimeloyl-D-alanyl-D-alanine + UDP-N-acetyl-alpha-D-glucosamine = di-trans,octa-cis-undecaprenyl diphospho-[N-acetyl-alpha-D-glucosaminyl-(1-&gt;4)]-N-acetyl-alpha-D-muramoyl-L-alanyl-D-glutamyl-meso-2,6-diaminopimeloyl-D-alanyl-D-alanine + UDP + H(+). It participates in cell wall biogenesis; peptidoglycan biosynthesis. Its function is as follows. Cell wall formation. Catalyzes the transfer of a GlcNAc subunit on undecaprenyl-pyrophosphoryl-MurNAc-pentapeptide (lipid intermediate I) to form undecaprenyl-pyrophosphoryl-MurNAc-(pentapeptide)GlcNAc (lipid intermediate II). This Shewanella oneidensis (strain ATCC 700550 / JCM 31522 / CIP 106686 / LMG 19005 / NCIMB 14063 / MR-1) protein is UDP-N-acetylglucosamine--N-acetylmuramyl-(pentapeptide) pyrophosphoryl-undecaprenol N-acetylglucosamine transferase.